The sequence spans 486 residues: Aspartyl/glutamyl-tRNA(Asn/Gln) amidotransferase subunit B (486 aa).

The protein belongs to the GatB/GatE family. GatB subfamily. As to quaternary structure, heterotrimer of A, B and C subunits.

It catalyses the reaction L-glutamyl-tRNA(Gln) + L-glutamine + ATP + H2O = L-glutaminyl-tRNA(Gln) + L-glutamate + ADP + phosphate + H(+). It carries out the reaction L-aspartyl-tRNA(Asn) + L-glutamine + ATP + H2O = L-asparaginyl-tRNA(Asn) + L-glutamate + ADP + phosphate + 2 H(+). In terms of biological role, allows the formation of correctly charged Asn-tRNA(Asn) or Gln-tRNA(Gln) through the transamidation of misacylated Asp-tRNA(Asn) or Glu-tRNA(Gln) in organisms which lack either or both of asparaginyl-tRNA or glutaminyl-tRNA synthetases. The reaction takes place in the presence of glutamine and ATP through an activated phospho-Asp-tRNA(Asn) or phospho-Glu-tRNA(Gln). This Janthinobacterium sp. (strain Marseille) (Minibacterium massiliensis) protein is Aspartyl/glutamyl-tRNA(Asn/Gln) amidotransferase subunit B.